The primary structure comprises 333 residues: L-lactate dehydrogenase A chain (333 aa).

NAD(+)-binding positions include 30-58 (GMVGMAAAISILLKDLTDELALVDVMEDK) and arginine 100. Substrate contacts are provided by arginine 107, asparagine 139, and arginine 170. Asparagine 139 serves as a coordination point for NAD(+). Histidine 194 functions as the Proton acceptor in the catalytic mechanism. Residue threonine 249 coordinates substrate.

It belongs to the LDH/MDH superfamily. LDH family. In terms of assembly, homotetramer.

Its subcellular location is the cytoplasm. It carries out the reaction (S)-lactate + NAD(+) = pyruvate + NADH + H(+). It participates in fermentation; pyruvate fermentation to lactate; (S)-lactate from pyruvate: step 1/1. This Cyprinus carpio (Common carp) protein is L-lactate dehydrogenase A chain (ldha).